A 134-amino-acid polypeptide reads, in one-letter code: Large ribosomal subunit protein eL32 (134 aa).

Belongs to the eukaryotic ribosomal protein eL32 family.

The chain is Large ribosomal subunit protein eL32 (RpL32) from Apis mellifera (Honeybee).